A 183-amino-acid chain; its full sequence is ATP synthase subunit b, chloroplastic (183 aa).

A helical transmembrane segment spans residues 27-49 (LATNPINLSVVLGVLIFFGKGVL).

This sequence belongs to the ATPase B chain family. F-type ATPases have 2 components, F(1) - the catalytic core - and F(0) - the membrane proton channel. F(1) has five subunits: alpha(3), beta(3), gamma(1), delta(1), epsilon(1). F(0) has four main subunits: a(1), b(1), b'(1) and c(10-14). The alpha and beta chains form an alternating ring which encloses part of the gamma chain. F(1) is attached to F(0) by a central stalk formed by the gamma and epsilon chains, while a peripheral stalk is formed by the delta, b and b' chains.

Its subcellular location is the plastid. It localises to the chloroplast thylakoid membrane. Functionally, f(1)F(0) ATP synthase produces ATP from ADP in the presence of a proton or sodium gradient. F-type ATPases consist of two structural domains, F(1) containing the extramembraneous catalytic core and F(0) containing the membrane proton channel, linked together by a central stalk and a peripheral stalk. During catalysis, ATP synthesis in the catalytic domain of F(1) is coupled via a rotary mechanism of the central stalk subunits to proton translocation. In terms of biological role, component of the F(0) channel, it forms part of the peripheral stalk, linking F(1) to F(0). The protein is ATP synthase subunit b, chloroplastic of Ranunculus macranthus (Large buttercup).